A 433-amino-acid polypeptide reads, in one-letter code: MPSSAQNASTPNTFFTASLAAADPEIADAIKGELGRQQHEIELIASENIVSRAVLEAQGSVMTNKYAEGYPGKRYYGGCEWVDVAETLAIERAKKLFGAQFANVQPNSGSQMNQAVFLALLQPGDTFMGLDLAAGGHLTHGSPVNMSGKWFKAAHYTVRRDDQLIDMDEVAKQAEQVKPKLIIAGGSAYSRPWDFKRFREIADSVGAYFMVDMAHFAGLVAGGVHASPVPHAHVTTTTTHKSLRGPRGGLILTNDEDIAKKINSAIFPGLQGGPLMHVIAAKAVAFKEALQPDFKVYAKNIVENARALAETLRGHGFEIVSGGTDNHLMLVDLRPKGLKGNISERALVRSGLTCNKNGIPFDPEKPFVTSGLRLGTPATTTRGFGVAEFKQVGALIAEVLNAVAQSPDGAAPGVEESVKKRVRELTDRFPIYS.

Residues Leu132 and 136–138 (GHL) each bind (6S)-5,6,7,8-tetrahydrofolate. Position 241 is an N6-(pyridoxal phosphate)lysine (Lys241).

The protein belongs to the SHMT family. Homodimer. It depends on pyridoxal 5'-phosphate as a cofactor.

Its subcellular location is the cytoplasm. It carries out the reaction (6R)-5,10-methylene-5,6,7,8-tetrahydrofolate + glycine + H2O = (6S)-5,6,7,8-tetrahydrofolate + L-serine. Its pathway is one-carbon metabolism; tetrahydrofolate interconversion. It functions in the pathway amino-acid biosynthesis; glycine biosynthesis; glycine from L-serine: step 1/1. Its function is as follows. Catalyzes the reversible interconversion of serine and glycine with tetrahydrofolate (THF) serving as the one-carbon carrier. This reaction serves as the major source of one-carbon groups required for the biosynthesis of purines, thymidylate, methionine, and other important biomolecules. Also exhibits THF-independent aldolase activity toward beta-hydroxyamino acids, producing glycine and aldehydes, via a retro-aldol mechanism. The protein is Serine hydroxymethyltransferase of Afipia carboxidovorans (strain ATCC 49405 / DSM 1227 / KCTC 32145 / OM5) (Oligotropha carboxidovorans).